A 175-amino-acid polypeptide reads, in one-letter code: Arsenite oxidase subunit AioB (175 aa).

The tat-type signal signal peptide spans 1–32; that stretch reads MSDTINLTRRGFLKVSGSGVAVAATLSPIASA. A Rieske domain is found at 62–158; that stretch reads NEPVSFTYPD…LRYDEASDAL (97 aa). Cys102, His104, Cys120, and His123 together coordinate [2Fe-2S] cluster. Cys107 and Cys122 are joined by a disulfide.

Belongs to the AOX family. In terms of assembly, heterodimer consisting of a large and a small subunit. The cofactor is [2Fe-2S] cluster. Predicted to be exported by the Tat system. The position of the signal peptide cleavage has not been experimentally proven.

The catalysed reaction is 2 oxidized [azurin] + arsenite + H2O = 2 reduced [azurin] + arsenate + 3 H(+). Functionally, involved in the detoxification of arsenic. Oxidizes As(III)O3(3-) (arsenite) to the somewhat less toxic As(V)O4(3-) (arsenate). In Alcaligenes faecalis, this protein is Arsenite oxidase subunit AioB (aioB).